Here is a 150-residue protein sequence, read N- to C-terminus: Protein E6 (150 aa).

Zinc fingers lie at residues 30-66 (CVYC…CKRC) and 103-139 (CHRC…CTNC). The PDZ-binding domain signature appears at 148–150 (TQV).

It belongs to the papillomaviridae E6 protein family. As to quaternary structure, forms homodimers. Interacts with ubiquitin-protein ligase UBE3A/E6-AP and thus forms a complex with human TP53. Interacts with human NFX1 and MAGI3. Interacts with human IRF3; this interaction inhibits the establishment of antiviral state. Interacts with human TYK2; this interaction inhibits JAK-STAT activation by interferon alpha. Interacts with host DLG1; this interaction leads to the proteasomal degradation of DLG1.

Its subcellular location is the host cytoplasm. The protein resides in the host nucleus. In terms of biological role, plays a major role in the induction and maintenance of cellular transformation. Acts mainly as an oncoprotein by stimulating the destruction of many host cell key regulatory proteins. E6 associates with host UBE3A/E6-AP ubiquitin-protein ligase, and inactivates tumor suppressors TP53 and TP73 by targeting them to the 26S proteasome for degradation. In turn, DNA damage and chromosomal instabilities increase and lead to cell proliferation and cancer development. The complex E6/E6AP targets several other substrates to degradation via the proteasome including host DLG1 or NFX1, a repressor of human telomerase reverse transcriptase (hTERT). The resulting increased expression of hTERT prevents the shortening of telomere length leading to cell immortalization. Other cellular targets including BAK1, Fas-associated death domain-containing protein (FADD) and procaspase 8, are degraded by E6/E6AP causing inhibition of apoptosis. E6 also inhibits immune response by interacting with host IRF3 and TYK2. These interactions prevent IRF3 transcriptional activities and inhibit TYK2-mediated JAK-STAT activation by interferon alpha resulting in inhibition of the interferon signaling pathway. This Human papillomavirus type 26 protein is Protein E6.